The primary structure comprises 118 residues: Non-specific lipid-transfer protein (118 aa).

The first 25 residues, 1-25 (MDCIRILWSVAVGLLLVSWRPTMFA), serve as a signal peptide directing secretion. Cystine bridges form between C30-C76, C40-C53, C54-C98, and C74-C113.

Belongs to the plant LTP family.

Its function is as follows. Plant non-specific lipid-transfer proteins transfer phospholipids as well as galactolipids across membranes. May play a role in wax or cutin deposition in the cell walls of expanding epidermal cells and certain secretory tissues. The chain is Non-specific lipid-transfer protein from Ambrosia artemisiifolia (Common ragweed).